The chain runs to 271 residues: Gap junction beta-5 protein (271 aa).

At 1 to 20 (MNWSVFEGLLSGVNKYSTAF) the chain is on the cytoplasmic side. A helical membrane pass occupies residues 21–40 (GRIWLSLVFVFRVLVYLVTA). The Extracellular segment spans residues 41–75 (ERVWGDDQKDFDCNTRQPGCTNVCYDEFFPVSHVR). The chain crosses the membrane as a helical span at residues 76-98 (LWALQLILVTCPSLLVVMHVAYR). Topologically, residues 99-124 (KAREKKYQQEVGKGYLYPNPGKKRGG) are cytoplasmic. Residues 125-147 (LWWTYVCSLLFKATIDIIFLYLF) traverse the membrane as a helical segment. Topologically, residues 148–182 (HAFYPRYTLPSMVKCHSAPCPNTVDCFIAKPSEKN) are extracellular. Residues 183–205 (IFIVFMLVTAIVCILLNLVELLY) traverse the membrane as a helical segment. The Cytoplasmic portion of the chain corresponds to 206-271 (LVIKRCSECA…PRAHVKKTIL (66 aa)). The interval 217 to 237 (AKRPPTAHAKNDPNWANPSSK) is disordered.

Belongs to the connexin family. Beta-type (group I) subfamily. In terms of assembly, a connexon is composed of a hexamer of connexins. In terms of tissue distribution, expressed in skin.

The protein localises to the cell membrane. It is found in the cell junction. The protein resides in the gap junction. Functionally, one gap junction consists of a cluster of closely packed pairs of transmembrane channels, the connexons, through which materials of low MW diffuse from one cell to a neighboring cell. This chain is Gap junction beta-5 protein (Gjb5), found in Rattus norvegicus (Rat).